Reading from the N-terminus, the 88-residue chain is Small ribosomal subunit protein uS17 (88 aa).

It belongs to the universal ribosomal protein uS17 family. As to quaternary structure, part of the 30S ribosomal subunit.

Functionally, one of the primary rRNA binding proteins, it binds specifically to the 5'-end of 16S ribosomal RNA. In Nitrosospira multiformis (strain ATCC 25196 / NCIMB 11849 / C 71), this protein is Small ribosomal subunit protein uS17.